Reading from the N-terminus, the 502-residue chain is Cardiolipin synthase (502 aa).

Helical transmembrane passes span 7-27 (VAILVVIVGALLALTNGFWEG), 29-49 (LLGLFSVLMSCSVIFIALVIS), and 59-79 (IAWLAVLGSFPIVGFLFYLLF). 2 PLD phosphodiesterase domains span residues 237–264 (INFRNHRKIIVIDGGVGFVGGLNIGDEY) and 415–442 (EKGFLHSKVIVVDGELASIGTANMDMRS). Active-site residues include His-242, Lys-244, Asp-249, His-420, Lys-422, and Asp-427.

The protein belongs to the phospholipase D family. Cardiolipin synthase subfamily.

The protein localises to the cell membrane. The enzyme catalyses 2 a 1,2-diacyl-sn-glycero-3-phospho-(1'-sn-glycerol) = a cardiolipin + glycerol. Functionally, catalyzes the reversible phosphatidyl group transfer from one phosphatidylglycerol molecule to another to form cardiolipin (CL) (diphosphatidylglycerol) and glycerol. In Geobacillus kaustophilus (strain HTA426), this protein is Cardiolipin synthase (cls).